Reading from the N-terminus, the 245-residue chain is 1-(5-phosphoribosyl)-5-[(5-phosphoribosylamino)methylideneamino] imidazole-4-carboxamide isomerase (245 aa).

Catalysis depends on D8, which acts as the Proton acceptor. Residue D130 is the Proton donor of the active site.

Belongs to the HisA/HisF family.

Its subcellular location is the cytoplasm. The catalysed reaction is 1-(5-phospho-beta-D-ribosyl)-5-[(5-phospho-beta-D-ribosylamino)methylideneamino]imidazole-4-carboxamide = 5-[(5-phospho-1-deoxy-D-ribulos-1-ylimino)methylamino]-1-(5-phospho-beta-D-ribosyl)imidazole-4-carboxamide. Its pathway is amino-acid biosynthesis; L-histidine biosynthesis; L-histidine from 5-phospho-alpha-D-ribose 1-diphosphate: step 4/9. The sequence is that of 1-(5-phosphoribosyl)-5-[(5-phosphoribosylamino)methylideneamino] imidazole-4-carboxamide isomerase from Pseudomonas syringae pv. tomato (strain ATCC BAA-871 / DC3000).